Consider the following 258-residue polypeptide: Imidazole glycerol phosphate synthase subunit HisF (258 aa).

Catalysis depends on residues Asp11 and Asp130.

The protein belongs to the HisA/HisF family. Heterodimer of HisH and HisF.

The protein localises to the cytoplasm. The catalysed reaction is 5-[(5-phospho-1-deoxy-D-ribulos-1-ylimino)methylamino]-1-(5-phospho-beta-D-ribosyl)imidazole-4-carboxamide + L-glutamine = D-erythro-1-(imidazol-4-yl)glycerol 3-phosphate + 5-amino-1-(5-phospho-beta-D-ribosyl)imidazole-4-carboxamide + L-glutamate + H(+). Its pathway is amino-acid biosynthesis; L-histidine biosynthesis; L-histidine from 5-phospho-alpha-D-ribose 1-diphosphate: step 5/9. In terms of biological role, IGPS catalyzes the conversion of PRFAR and glutamine to IGP, AICAR and glutamate. The HisF subunit catalyzes the cyclization activity that produces IGP and AICAR from PRFAR using the ammonia provided by the HisH subunit. This is Imidazole glycerol phosphate synthase subunit HisF from Shigella boydii serotype 4 (strain Sb227).